Consider the following 577-residue polypeptide: MGTRLLALAPWLLLLLLQLAGASHVVHRSLEAEQAPSSVPASIVSPLLRTGYHFQPPMNWINDPNGPLYYKGWYHLFYQYNPKGAVWGNIVWAHSVSQDLINWIALEPAIKPDIPSDQYGCWSGSATILPDGTPAILYTGIDRPNINYQVQNIAFPKNASDPLLREWVKPAYNPVATPEPGMNATQFRDPTTAWYADGHWRMLVGGLKGARRGLAYLYRSRDFKTWVRAKHPLHSALTGMWECPDFFPLQAPGLQAGLDTSVPSSKYVLKNSLDLTRYDYYTVGIYNKVTERYVPDNPAGDYHRLRYDYGNFYASKTFFDPVKHRRILLGWANESDSVTYDKAKGWAGIHAIPRKVWLDPSGKQLLQWPIEELEKLRGKSVSVSDKVVKPGEHFQVTGLGTYQADVEVSLEVSGLEKAEALDPAFGDDAERLCGAKGADVRGGVVFGLWVLASAGLEEKTAVFFRVFKPAGHGAKPVVLMCTDPTKSSLSPDLYKPTFAGFVDTDISSGKISLRSLIDRSVVESFGAGGKTCILSRVYPSMAIGDKAHLYVFNNGEADIKISHLKAWEMKKPLMNGA.

The first 22 residues, 1-22, serve as a signal peptide directing secretion; the sequence is MGTRLLALAPWLLLLLLQLAGA. Asp63 is an active-site residue. 3 N-linked (GlcNAc...) asparagine glycosylation sites follow: Asn158, Asn183, and Asn333.

It belongs to the glycosyl hydrolase 32 family.

The protein localises to the secreted. It localises to the extracellular space. Its subcellular location is the apoplast. It is found in the cell wall. The catalysed reaction is Hydrolysis of terminal non-reducing beta-D-fructofuranoside residues in beta-D-fructofuranosides.. May play a role in sucrose partitioning during seed development and in stress response. This Oryza sativa subsp. indica (Rice) protein is Beta-fructofuranosidase, insoluble isoenzyme 1 (CIN1).